The following is a 420-amino-acid chain: UDP-N-acetylglucosamine 1-carboxyvinyltransferase (420 aa).

22–23 (KN) contributes to the phosphoenolpyruvate binding site. Arg92 lines the UDP-N-acetyl-alpha-D-glucosamine pocket. Residue Cys116 is the Proton donor of the active site. At Cys116 the chain carries 2-(S-cysteinyl)pyruvic acid O-phosphothioketal. UDP-N-acetyl-alpha-D-glucosamine contacts are provided by residues 121 to 125 (RPIDL), Asp307, and Leu329.

The protein belongs to the EPSP synthase family. MurA subfamily.

The protein localises to the cytoplasm. It catalyses the reaction phosphoenolpyruvate + UDP-N-acetyl-alpha-D-glucosamine = UDP-N-acetyl-3-O-(1-carboxyvinyl)-alpha-D-glucosamine + phosphate. It functions in the pathway cell wall biogenesis; peptidoglycan biosynthesis. Functionally, cell wall formation. Adds enolpyruvyl to UDP-N-acetylglucosamine. The protein is UDP-N-acetylglucosamine 1-carboxyvinyltransferase of Nitratiruptor sp. (strain SB155-2).